The sequence spans 325 residues: Melanocortin receptor 5 (325 aa).

Residues 1–37 are Extracellular-facing; sequence MNSSSTLTVLNLTLNASEDGILGSNVKNKSLACEEMG. Asn2, Asn11, Asn15, and Asn28 each carry an N-linked (GlcNAc...) asparagine glycan. Residues 38–61 form a helical membrane-spanning segment; the sequence is IAVEVFLTLGLVSLLENILVIGAI. The Cytoplasmic segment spans residues 62–73; the sequence is VKNKNLHSPMYF. Residues 74-97 traverse the membrane as a helical segment; that stretch reads FVGSLAVADMLVSMSNAWETVTIY. Residues 98–114 lie on the Extracellular side of the membrane; sequence LLNNKHLVIADTFVRHI. The helical transmembrane segment at 115-138 threads the bilayer; that stretch reads DNVFDSMICISVVASMCSLLAIAV. Residues 139 to 155 lie on the Cytoplasmic side of the membrane; the sequence is DRYITIFYALRYHHIMT. The chain crosses the membrane as a helical span at residues 156–179; it reads ARRSGVIIACIWTFCISCGIVFII. At 180-186 the chain is on the extracellular side; it reads YYESKYV. The helical transmembrane segment at 187 to 211 threads the bilayer; the sequence is IICLISMFFTMLFFMVSLYIHMFLL. Residues 212-239 lie on the Cytoplasmic side of the membrane; it reads ARNHVKRIAASPRYNSVRQRTSMKGAIT. The helical transmembrane segment at 240-265 threads the bilayer; it reads LTMLLGIFIVCWSPFFLHLILMISCP. Residues 266 to 273 lie on the Extracellular side of the membrane; sequence QNVYCSCF. Residues 274–297 traverse the membrane as a helical segment; that stretch reads MSYFNMYLILIMCNSVIDPLIYAL. Residues 298-325 lie on the Cytoplasmic side of the membrane; sequence RSQEMRRTFKEIVCCHGFRRPCRLLGGY. Residues Cys311 and Cys312 are each lipidated (S-palmitoyl cysteine).

The protein belongs to the G-protein coupled receptor 1 family. As to expression, skin, adrenal gland, skeletal muscle, bone marrow, spleen, thymus, gonads, uterus and brain.

It localises to the cell membrane. Receptor for MSH (alpha, beta and gamma) and ACTH. The activity of this receptor is mediated by G proteins which activate adenylate cyclase. This receptor is a possible mediator of the immunomodulation properties of melanocortins. In Mus musculus (Mouse), this protein is Melanocortin receptor 5 (Mc5r).